The primary structure comprises 104 residues: uncharacterized protein (104 aa).

This is an uncharacterized protein from Dictyostelium discoideum (Social amoeba).